The primary structure comprises 101 residues: Iron-sulfur cluster assembly protein CyaY (101 aa).

This sequence belongs to the frataxin family.

Its function is as follows. Involved in iron-sulfur (Fe-S) cluster assembly. May act as a regulator of Fe-S biogenesis. The chain is Iron-sulfur cluster assembly protein CyaY from Actinobacillus pleuropneumoniae serotype 7 (strain AP76).